The following is a 650-amino-acid chain: MAMDGYLWMVILGFIIAFILAFSVGANDVANSFGTAVGSGVVTLRQACILASIFETTGSVLLGAKVGETIRKGIIDVNLYNDTVVTLMAGEVSAMVGSAVWQLIASFLRLPISGTHCIVGSTIGFSLVANGTKGVQWMELVKIVASWFISPLLSGFMSGVLFVLIRMFILTKEDPVPNGLQALPLFYAATIAINVFSIMYTGAPVLGLSLPIWAIALISFGVALLFAFFVWLFVCPWMRRKIAGKLEKESALSRTSDESLSKVQEVESPFKELPGAKASDDSAVPLTNPTGEAVGPSEGTSTGNHPRTAYGRALSMTHGSAKSPISNGTFSFEGHMRNDGHVYHTVHKDSGLYKDLLHKIHVDKGPEEKLSQENNYRLLRRNNSYTCYTAAICGMPVHTTFRATDASSAPEDSEKLVGDTVSYSKKRLRYDSYSSYCNAVAEAEIEAEEGGVEMRLASELADPDQPHDDPTEEEKEEKDTAEVHLLFHFLQVLTACFGSFAHGGNDVSNAIGPLVALWLIYEQGGVMQEAATPVWLLFYGGVGICTGLWVWGRRVIQTMGKDLTPITPSSGFTIELASAFTVVIASNIGLPVSTTHCKVGSVVAVGWIRSRKAVDWHLFRNIFVAWFVTVPVAGLFSAAIMAIFMYGILS.

Topologically, residues 1–5 are extracellular; it reads MAMDG. A helical membrane pass occupies residues 6–26; that stretch reads YLWMVILGFIIAFILAFSVGA. At 27–46 the chain is on the cytoplasmic side; the sequence is NDVANSFGTAVGSGVVTLRQ. A helical transmembrane segment spans residues 47–67; sequence ACILASIFETTGSVLLGAKVG. The Extracellular portion of the chain corresponds to 68–83; sequence ETIRKGIIDVNLYNDT. Asn81 carries N-linked (GlcNAc...) asparagine glycosylation. The chain crosses the membrane as a helical span at residues 84 to 104; the sequence is VVTLMAGEVSAMVGSAVWQLI. The Cytoplasmic segment spans residues 105 to 109; that stretch reads ASFLR. Residues 110–130 traverse the membrane as a helical segment; it reads LPISGTHCIVGSTIGFSLVAN. Topologically, residues 131–142 are extracellular; it reads GTKGVQWMELVK. Residues 143 to 163 traverse the membrane as a helical segment; it reads IVASWFISPLLSGFMSGVLFV. Residues 164-192 are Cytoplasmic-facing; the sequence is LIRMFILTKEDPVPNGLQALPLFYAATIA. The helical transmembrane segment at 193–212 threads the bilayer; that stretch reads INVFSIMYTGAPVLGLSLPI. Residue Trp213 is a topological domain, extracellular. Residues 214–234 traverse the membrane as a helical segment; that stretch reads AIALISFGVALLFAFFVWLFV. The Cytoplasmic portion of the chain corresponds to 235–482; that stretch reads CPWMRRKIAG…EEKEEKDTAE (248 aa). A phosphoserine mark is found at Ser253, Ser256, Ser259, Ser268, Ser315, and Ser384. The disordered stretch occupies residues 268-310; that stretch reads SPFKELPGAKASDDSAVPLTNPTGEAVGPSEGTSTGNHPRTAY. The helical transmembrane segment at 483-503 threads the bilayer; that stretch reads VHLLFHFLQVLTACFGSFAHG. The Extracellular portion of the chain corresponds to 504–530; that stretch reads GNDVSNAIGPLVALWLIYEQGGVMQEA. The chain crosses the membrane as a helical span at residues 531-551; sequence ATPVWLLFYGGVGICTGLWVW. The Cytoplasmic segment spans residues 552–571; that stretch reads GRRVIQTMGKDLTPITPSSG. Residues 572 to 586 traverse the membrane as a helical segment; that stretch reads FTIELASAFTVVIAS. The Extracellular segment spans residues 587-593; it reads NIGLPVS. A helical membrane pass occupies residues 594–609; it reads TTHCKVGSVVAVGWIR. Topologically, residues 610-621 are cytoplasmic; the sequence is SRKAVDWHLFRN. The chain crosses the membrane as a helical span at residues 622-642; sequence IFVAWFVTVPVAGLFSAAIMA. The Extracellular segment spans residues 643–650; sequence IFMYGILS.

Belongs to the inorganic phosphate transporter (PiT) (TC 2.A.20) family. As to quaternary structure, homodimer.

Its subcellular location is the cell membrane. It is found in the apical cell membrane. The enzyme catalyses 2 Na(+)(out) + phosphate(out) = 2 Na(+)(in) + phosphate(in). Sodium-phosphate symporter which preferentially transports the monovalent form of phosphate with a stoichiometry of two sodium ions per phosphate ion. Plays a critical role in the determination of bone quality and strength by providing phosphate for bone mineralization. Required to maintain normal cerebrospinal fluid phosphate levels. Mediates phosphate-induced calcification of vascular smooth muscle cells (VCMCs) and can functionally compensate for loss of SLC20A1 in VCMCs. Its function is as follows. (Microbial infection) Functions as a retroviral receptor and confers hamster cells susceptibility to infection to Gibbon Ape Leukemia Virus (GaLV) and amphotropic murine leukemia virus (A-MuLV). The sequence is that of Sodium-dependent phosphate transporter 2 (SLC20A2) from Cricetulus griseus (Chinese hamster).